The following is a 658-amino-acid chain: Protein kinase and PP2C-like domain-containing protein (658 aa).

A Protein kinase domain is found at 30-314 (FTLLSPIAKG…DNVVLELESI (285 aa)). ATP-binding positions include 36–44 (IAKGSESVV) and K57. D149 serves as the catalytic Proton acceptor. Positions 392 to 648 (SCGSFATCGR…DNITVIVVFL (257 aa)) constitute a PPM-type phosphatase domain. 4 residues coordinate Mn(2+): D428, G429, D599, and D639.

It in the N-terminal section; belongs to the protein kinase superfamily. Ser/Thr protein kinase family. In the C-terminal section; belongs to the PP2C family. Mg(2+) serves as cofactor. The cofactor is Mn(2+).

The catalysed reaction is L-seryl-[protein] + ATP = O-phospho-L-seryl-[protein] + ADP + H(+). The enzyme catalyses L-threonyl-[protein] + ATP = O-phospho-L-threonyl-[protein] + ADP + H(+). It carries out the reaction O-phospho-L-seryl-[protein] + H2O = L-seryl-[protein] + phosphate. It catalyses the reaction O-phospho-L-threonyl-[protein] + H2O = L-threonyl-[protein] + phosphate. The chain is Protein kinase and PP2C-like domain-containing protein from Arabidopsis thaliana (Mouse-ear cress).